A 213-amino-acid chain; its full sequence is High frequency lysogenization protein HflD homolog (213 aa).

The stretch at 79 to 126 (QGLNAELTRYTLSLMVLERKLSSAKGALDTLGNRINGLQRQLEHFDLQ) forms a coiled coil.

The protein belongs to the HflD family.

Its subcellular location is the cytoplasm. The protein localises to the cell inner membrane. The chain is High frequency lysogenization protein HflD homolog from Shigella flexneri serotype 5b (strain 8401).